The primary structure comprises 698 residues: Elongation factor G (698 aa).

One can recognise a tr-type G domain in the interval 8–284 (ANVRNIGIMA…AVVDYLPSPL (277 aa)). GTP-binding positions include 17–24 (AHIDAGKT), 81–85 (DTPGH), and 135–138 (NKLD).

Belongs to the TRAFAC class translation factor GTPase superfamily. Classic translation factor GTPase family. EF-G/EF-2 subfamily.

It is found in the cytoplasm. Functionally, catalyzes the GTP-dependent ribosomal translocation step during translation elongation. During this step, the ribosome changes from the pre-translocational (PRE) to the post-translocational (POST) state as the newly formed A-site-bound peptidyl-tRNA and P-site-bound deacylated tRNA move to the P and E sites, respectively. Catalyzes the coordinated movement of the two tRNA molecules, the mRNA and conformational changes in the ribosome. This Salinispora tropica (strain ATCC BAA-916 / DSM 44818 / JCM 13857 / NBRC 105044 / CNB-440) protein is Elongation factor G.